Reading from the N-terminus, the 891-residue chain is Mating-type protein A-alpha Z3 (891 aa).

A DNA-binding region (homeobox; TALE-type) is located at residues 111–189 (EWQENMPPVP…AARIRIGWTH (79 aa)). Residues 331–360 (AAHEKRQQARREQRQAKNERDAAQMREEQR) are compositionally biased toward basic and acidic residues. Disordered stretches follow at residues 331-592 (AAHE…VNWD), 606-671 (YLDS…ASET), 779-812 (SILSTGPKAGITRRQTPPAKRRVSPRAQEPVEPS), and 836-861 (PKKDRRYAERAERRASKANSFDSPDT). Composition is skewed to acidic residues over residues 369-400 (SSDDEGEDEDDEESTDAYDSEASDSEDDSDSD) and 427-457 (ADDEDEASDDDEDDNVEGDDESEEEEEEEDT). Low complexity-rich tracts occupy residues 542–559 (PSKTTKAPASTSTTKSST) and 612–650 (SSRPQRRASTSSSSSTSSSLSRTPSLTSLSSLSSGSSVS). The span at 651-660 (TCETVGTDSS) shows a compositional bias: polar residues. The segment covering 841-850 (RYAERAERRA) has biased composition (basic and acidic residues).

The protein belongs to the TALE/M-ATYP homeobox family.

It localises to the nucleus. Its function is as follows. Specifies A-alpha-3 mating-type. May regulate the expression of genes specific to the homokaryotic cell type. This chain is Mating-type protein A-alpha Z3, found in Schizophyllum commune (Split gill fungus).